The chain runs to 660 residues: DNA mismatch repair protein MutL (660 aa).

This sequence belongs to the DNA mismatch repair MutL/HexB family.

Its function is as follows. This protein is involved in the repair of mismatches in DNA. It is required for dam-dependent methyl-directed DNA mismatch repair. May act as a 'molecular matchmaker', a protein that promotes the formation of a stable complex between two or more DNA-binding proteins in an ATP-dependent manner without itself being part of a final effector complex. This chain is DNA mismatch repair protein MutL, found in Streptococcus pyogenes serotype M12 (strain MGAS2096).